A 238-amino-acid chain; its full sequence is Octanoyltransferase (238 aa).

The BPL/LPL catalytic domain occupies 40–220 (AGGSDALLLL…RVCDALDGRL (181 aa)). Residues 78 to 85 (RGGKITWH), 150 to 152 (AIG), and 163 to 165 (GFA) contribute to the substrate site. C181 acts as the Acyl-thioester intermediate in catalysis.

It belongs to the LipB family.

It is found in the cytoplasm. It catalyses the reaction octanoyl-[ACP] + L-lysyl-[protein] = N(6)-octanoyl-L-lysyl-[protein] + holo-[ACP] + H(+). Its pathway is protein modification; protein lipoylation via endogenous pathway; protein N(6)-(lipoyl)lysine from octanoyl-[acyl-carrier-protein]: step 1/2. Its function is as follows. Catalyzes the transfer of endogenously produced octanoic acid from octanoyl-acyl-carrier-protein onto the lipoyl domains of lipoate-dependent enzymes. Lipoyl-ACP can also act as a substrate although octanoyl-ACP is likely to be the physiological substrate. The protein is Octanoyltransferase of Mycobacterium sp. (strain JLS).